The sequence spans 654 residues: Fructose-1,6-bisphosphatase class 3 (654 aa).

The segment at 288 to 307 is disordered; the sequence is NPAFKPKKRPDKHERLTQRE. Positions 298 to 307 are enriched in basic and acidic residues; it reads DKHERLTQRE.

Belongs to the FBPase class 3 family. The cofactor is Mn(2+).

It catalyses the reaction beta-D-fructose 1,6-bisphosphate + H2O = beta-D-fructose 6-phosphate + phosphate. The protein operates within carbohydrate biosynthesis; gluconeogenesis. The polypeptide is Fructose-1,6-bisphosphatase class 3 (Staphylococcus aureus (strain MSSA476)).